We begin with the raw amino-acid sequence, 428 residues long: Serine--tRNA ligase (428 aa).

An L-serine-binding site is contributed by 231 to 233 (TAE). Residue 262–264 (RAE) participates in ATP binding. Residue E285 participates in L-serine binding. 349–352 (EISS) contributes to the ATP binding site. Residue S385 coordinates L-serine.

This sequence belongs to the class-II aminoacyl-tRNA synthetase family. Type-1 seryl-tRNA synthetase subfamily. Homodimer. The tRNA molecule binds across the dimer.

The protein localises to the cytoplasm. It carries out the reaction tRNA(Ser) + L-serine + ATP = L-seryl-tRNA(Ser) + AMP + diphosphate + H(+). The enzyme catalyses tRNA(Sec) + L-serine + ATP = L-seryl-tRNA(Sec) + AMP + diphosphate + H(+). The protein operates within aminoacyl-tRNA biosynthesis; selenocysteinyl-tRNA(Sec) biosynthesis; L-seryl-tRNA(Sec) from L-serine and tRNA(Sec): step 1/1. Its function is as follows. Catalyzes the attachment of serine to tRNA(Ser). Is also able to aminoacylate tRNA(Sec) with serine, to form the misacylated tRNA L-seryl-tRNA(Sec), which will be further converted into selenocysteinyl-tRNA(Sec). The polypeptide is Serine--tRNA ligase (Methylorubrum extorquens (strain PA1) (Methylobacterium extorquens)).